A 326-amino-acid chain; its full sequence is NAD-dependent protein deacylase SIR5 (326 aa).

A mitochondrion-targeting transit peptide spans 1-26 (MRLLRPTPRLSSIFSSKTATSNLRFF). The Deacetylase sirtuin-type domain maps to 28–324 (AMAPHNDVGA…IGKLETDKKE (297 aa)). NAD(+) is bound at residue 53–72 (GAGLSASSGLPTFRGAGGLW). The substrate site is built by Y97 and R100. H151 (proton acceptor) is an active-site residue. C159, C162, C211, and C214 together coordinate Zn(2+).

This sequence belongs to the sirtuin family. Class I subfamily. In terms of assembly, interacts with LAT1; the interaction is direct. Zn(2+) serves as cofactor.

Its subcellular location is the mitochondrion. It is found in the cytoplasm. The protein resides in the cytosol. It localises to the nucleus. The protein localises to the chromosome. The catalysed reaction is N(6)-acetyl-L-lysyl-[protein] + NAD(+) + H2O = 2''-O-acetyl-ADP-D-ribose + nicotinamide + L-lysyl-[protein]. It catalyses the reaction N(6)-(2E)-butenoyl-L-lysyl-[protein] + H2O = (2E)-2-butenoate + L-lysyl-[protein]. In terms of biological role, NAD-dependent protein-lysine deacylase that decrotonylates the PDC (pyruvate dehydrogenase complex) subunit LAT1 at 'Lys-148' to inhibit PDC activity and consequently ATP production. Also decrotonylates histone H3 crotonylated at 'Lys-18' (H3K18cr), to repress the expression of genes involved in aerobic respiration. May also act as a NAD-dependent deacetylase. Does not mediate desuccinylation, demalonylation, or deglutarylation of LAT1. The polypeptide is NAD-dependent protein deacylase SIR5 (Fusarium oxysporum f. sp. lycopersici (strain 4287 / CBS 123668 / FGSC 9935 / NRRL 34936) (Fusarium vascular wilt of tomato)).